A 315-amino-acid chain; its full sequence is tRNA-dihydrouridine(16) synthase (315 aa).

FMN contacts are provided by residues 7-9 (PME) and glutamine 68. The active-site Proton donor is the cysteine 98. Residues lysine 139, 200–202 (NGE), and 224–225 (GR) each bind FMN.

Belongs to the Dus family. DusC subfamily. It depends on FMN as a cofactor.

It carries out the reaction 5,6-dihydrouridine(16) in tRNA + NADP(+) = uridine(16) in tRNA + NADPH + H(+). The catalysed reaction is 5,6-dihydrouridine(16) in tRNA + NAD(+) = uridine(16) in tRNA + NADH + H(+). Functionally, catalyzes the synthesis of 5,6-dihydrouridine (D), a modified base found in the D-loop of most tRNAs, via the reduction of the C5-C6 double bond in target uridines. Specifically modifies U16 in tRNAs. The polypeptide is tRNA-dihydrouridine(16) synthase (Shigella flexneri).